We begin with the raw amino-acid sequence, 261 residues long: Indole-3-glycerol phosphate synthase (261 aa).

It belongs to the TrpC family.

It carries out the reaction 1-(2-carboxyphenylamino)-1-deoxy-D-ribulose 5-phosphate + H(+) = (1S,2R)-1-C-(indol-3-yl)glycerol 3-phosphate + CO2 + H2O. It functions in the pathway amino-acid biosynthesis; L-tryptophan biosynthesis; L-tryptophan from chorismate: step 4/5. This is Indole-3-glycerol phosphate synthase from Burkholderia mallei (strain NCTC 10247).